The chain runs to 206 residues: Octanoyltransferase (206 aa).

The 177-residue stretch at Pro-30–Ile-206 folds into the BPL/LPL catalytic domain. Residues Arg-69–His-76, Ser-137–Gly-139, and Gly-150–Ala-152 contribute to the substrate site. Residue Cys-168 is the Acyl-thioester intermediate of the active site.

Belongs to the LipB family.

Its subcellular location is the cytoplasm. The enzyme catalyses octanoyl-[ACP] + L-lysyl-[protein] = N(6)-octanoyl-L-lysyl-[protein] + holo-[ACP] + H(+). Its pathway is protein modification; protein lipoylation via endogenous pathway; protein N(6)-(lipoyl)lysine from octanoyl-[acyl-carrier-protein]: step 1/2. Functionally, catalyzes the transfer of endogenously produced octanoic acid from octanoyl-acyl-carrier-protein onto the lipoyl domains of lipoate-dependent enzymes. Lipoyl-ACP can also act as a substrate although octanoyl-ACP is likely to be the physiological substrate. The sequence is that of Octanoyltransferase from Francisella tularensis subsp. tularensis (strain FSC 198).